A 339-amino-acid chain; its full sequence is Serpentine receptor class alpha-24 (339 aa).

7 consecutive transmembrane segments (helical) span residues 26–46 (ITVKMSSVLVVTVILLSYYFA), 65–82 (LILLVCLLNSIIHQTTML), 112–132 (ELFVYYLTTYFSTYSVFSLAF), 151–171 (VSIFLLFIQLIFTLGTYYVGL), 199–219 (FRTLIMGICIIVTVFVYYLSV), 248–268 (VCILIVLQFACILISSLGVNY), and 284–304 (LAPFFVGVTYANLCLPLVIHC).

The protein belongs to the nematode receptor-like protein sra family.

Its subcellular location is the membrane. This chain is Serpentine receptor class alpha-24 (sra-24), found in Caenorhabditis elegans.